Consider the following 523-residue polypeptide: Putative pentatricopeptide repeat-containing protein At3g15200 (523 aa).

10 PPR repeats span residues 142 to 172 (SSML…MSKR), 177 to 211 (NEKT…GIDD), 212 to 242 (DLVA…RRRE), 246 to 280 (DIKA…KCRP), 281 to 315 (DVVS…RRNP), 316 to 350 (DVKI…GPDP), 351 to 385 (NVVT…GGSC), 388 to 418 (NDVT…NKCE), 420 to 454 (TSDL…GLGP), and 455 to 489 (DQRT…GMVP). The tract at residues 497-523 (LNQNKTKPRVEDKMLRSNLTSEESESD) is disordered.

The protein belongs to the PPR family. P subfamily.

This Arabidopsis thaliana (Mouse-ear cress) protein is Putative pentatricopeptide repeat-containing protein At3g15200.